The primary structure comprises 417 residues: DNA primase small subunit (417 aa).

Met1 is modified (N-acetylmethionine). Active-site residues include Glu44, Asp109, and Asp111. 2 residues coordinate Mg(2+): Asp109 and Asp111. Mn(2+)-binding residues include Asp109 and Asp111. Asp109–Asp111 lines the a ribonucleoside 5'-triphosphate pocket. Residues Cys121, Cys122, Cys128, and Cys131 each contribute to the Zn(2+) site. Residues Cys121–Cys131 carry the Zinc knuckle motif motif. An a ribonucleoside 5'-triphosphate-binding site is contributed by Ser160–His166. Position 305 (Asp305) interacts with Mg(2+). Asp305 lines the Mn(2+) pocket. A ribonucleoside 5'-triphosphate-binding positions include His314–Lys317 and His323.

The protein belongs to the eukaryotic-type primase small subunit family. Heterodimer of a catalytic subunit PRIM1 and a regulatory subunit PRIM2, also known as the DNA primase complex. Interacts with PRIM2/p58 (via C-terminus). Component of the alpha DNA polymerase complex (also known as the alpha DNA polymerase-primase complex) consisting of four subunits: the catalytic subunit POLA1, the regulatory subunit POLA2, and the primase complex subunits PRIM1 and PRIM2 respectively. Within the complex, POLA1 directly interacts with PRIM2. Mg(2+) serves as cofactor. The cofactor is Mn(2+).

It carries out the reaction ssDNA + n NTP = ssDNA/pppN(pN)n-1 hybrid + (n-1) diphosphate.. With respect to regulation, the presence of the regulatory subunit PRIM2/p58 accelerates the kinetics of initiation and primer extension. Catalytic subunit of the DNA primase complex and component of the DNA polymerase alpha complex (also known as the alpha DNA polymerase-primase complex) which play an essential role in the initiation of DNA synthesis. During the S phase of the cell cycle, the DNA polymerase alpha complex (composed of a catalytic subunit POLA1, an accessory subunit POLA2 and two primase subunits, the catalytic subunit PRIM1 and the regulatory subunit PRIM2) is recruited to DNA at the replicative forks via direct interactions with MCM10 and WDHD1. The primase subunit of the polymerase alpha complex initiates DNA synthesis by oligomerising short RNA primers on both leading and lagging strands. These primers are initially extended by the polymerase alpha catalytic subunit and subsequently transferred to polymerase delta and polymerase epsilon for processive synthesis on the lagging and leading strand, respectively. In the primase complex, both subunits are necessary for the initial di-nucleotide formation, but the extension of the primer depends only on the catalytic subunit. Can add both ribo- and deoxynucleotides during elongation of the primers. Synthesizes 9-mer RNA primers (also known as the 'unit length' RNA primers). Incorporates only ribonucleotides in the presence of ribo- and deoxy-nucleotide triphosphates (rNTPs, dNTPs). Requires template thymine or cytidine to start the RNA primer synthesis, with an adenine or guanine at its 5'-end. Binds single stranded DNA. In Mus musculus (Mouse), this protein is DNA primase small subunit (Prim1).